The sequence spans 225 residues: MRIDIITVLPEMIENTLNCSIIGRAQERGLLELKLHQLRDYSTDKWKRVDDYPFGGEPGMVMQIEPIDRIITELKTQREYDEVIFTSPDGERFDQPMANELSLLSNLIVLCGHYKGIDYRIREHLITREISIGDYVLTGGELAAAVMTDAIARLIPGVLNDAGSALSDTFQDNLLAPPVYTRPAEYKGWRVPDILLSGHEANIAKWRLEQAVERTKRLRPDLIKD.

S-adenosyl-L-methionine-binding positions include glycine 112 and 132–137; that span reads IGDYVL.

The protein belongs to the RNA methyltransferase TrmD family. As to quaternary structure, homodimer.

The protein localises to the cytoplasm. The catalysed reaction is guanosine(37) in tRNA + S-adenosyl-L-methionine = N(1)-methylguanosine(37) in tRNA + S-adenosyl-L-homocysteine + H(+). In terms of biological role, specifically methylates guanosine-37 in various tRNAs. This Porphyromonas gingivalis (strain ATCC BAA-308 / W83) protein is tRNA (guanine-N(1)-)-methyltransferase.